A 362-amino-acid chain; its full sequence is Cobalt-precorrin-5B C(1)-methyltransferase (362 aa).

The protein belongs to the CbiD family.

The catalysed reaction is Co-precorrin-5B + S-adenosyl-L-methionine = Co-precorrin-6A + S-adenosyl-L-homocysteine. It participates in cofactor biosynthesis; adenosylcobalamin biosynthesis; cob(II)yrinate a,c-diamide from sirohydrochlorin (anaerobic route): step 6/10. Its function is as follows. Catalyzes the methylation of C-1 in cobalt-precorrin-5B to form cobalt-precorrin-6A. The protein is Cobalt-precorrin-5B C(1)-methyltransferase of Burkholderia lata (strain ATCC 17760 / DSM 23089 / LMG 22485 / NCIMB 9086 / R18194 / 383).